A 203-amino-acid chain; its full sequence is N-(5'-phosphoribosyl)anthranilate isomerase (203 aa).

It belongs to the TrpF family.

It carries out the reaction N-(5-phospho-beta-D-ribosyl)anthranilate = 1-(2-carboxyphenylamino)-1-deoxy-D-ribulose 5-phosphate. The protein operates within amino-acid biosynthesis; L-tryptophan biosynthesis; L-tryptophan from chorismate: step 3/5. The protein is N-(5'-phosphoribosyl)anthranilate isomerase of Caldanaerobacter subterraneus subsp. tengcongensis (strain DSM 15242 / JCM 11007 / NBRC 100824 / MB4) (Thermoanaerobacter tengcongensis).